A 154-amino-acid polypeptide reads, in one-letter code: Myoglobin (154 aa).

The 147-residue stretch at 2-148 (GLSDGEWQLV…FRNDIAAKYK (147 aa)) folds into the Globin domain. Ser4 carries the phosphoserine modification. Residue His65 participates in nitrite binding. O2 is bound at residue His65. Thr68 is subject to Phosphothreonine. Position 94 (His94) interacts with heme b.

This sequence belongs to the globin family. In terms of assembly, monomeric.

The protein resides in the cytoplasm. It is found in the sarcoplasm. It catalyses the reaction Fe(III)-heme b-[protein] + nitric oxide + H2O = Fe(II)-heme b-[protein] + nitrite + 2 H(+). It carries out the reaction H2O2 + AH2 = A + 2 H2O. Functionally, monomeric heme protein which primary function is to store oxygen and facilitate its diffusion within muscle tissues. Reversibly binds oxygen through a pentacoordinated heme iron and enables its timely and efficient release as needed during periods of heightened demand. Depending on the oxidative conditions of tissues and cells, and in addition to its ability to bind oxygen, it also has a nitrite reductase activity whereby it regulates the production of bioactive nitric oxide. Under stress conditions, like hypoxia and anoxia, it also protects cells against reactive oxygen species thanks to its pseudoperoxidase activity. The polypeptide is Myoglobin (MB) (Vulpes chama (Cape fox)).